Here is a 209-residue protein sequence, read N- to C-terminus: Prolactin (209 aa).

An N-terminal signal peptide occupies residues 1–24; sequence MAQRFKGRSLFLTALLCLASQGYA. Disulfide bonds link C70/C184 and C201/C209.

It belongs to the somatotropin/prolactin family.

It localises to the secreted. The protein is Prolactin (prl) of Anguilla anguilla (European freshwater eel).